Reading from the N-terminus, the 393-residue chain is Lipoyl synthase, mitochondrial (393 aa).

The [4Fe-4S] cluster site is built by cysteine 115, cysteine 120, cysteine 126, cysteine 146, cysteine 150, cysteine 153, and serine 362. Residues 131–351 (ETGTATATIM…RILGMDMGFR (221 aa)) form the Radical SAM core domain.

It belongs to the radical SAM superfamily. Lipoyl synthase family. It depends on [4Fe-4S] cluster as a cofactor.

It is found in the mitochondrion. It carries out the reaction [[Fe-S] cluster scaffold protein carrying a second [4Fe-4S](2+) cluster] + N(6)-octanoyl-L-lysyl-[protein] + 2 oxidized [2Fe-2S]-[ferredoxin] + 2 S-adenosyl-L-methionine + 4 H(+) = [[Fe-S] cluster scaffold protein] + N(6)-[(R)-dihydrolipoyl]-L-lysyl-[protein] + 4 Fe(3+) + 2 hydrogen sulfide + 2 5'-deoxyadenosine + 2 L-methionine + 2 reduced [2Fe-2S]-[ferredoxin]. Its pathway is protein modification; protein lipoylation via endogenous pathway; protein N(6)-(lipoyl)lysine from octanoyl-[acyl-carrier-protein]: step 2/2. Functionally, catalyzes the radical-mediated insertion of two sulfur atoms into the C-6 and C-8 positions of the octanoyl moiety bound to the lipoyl domains of lipoate-dependent enzymes, thereby converting the octanoylated domains into lipoylated derivatives. In Vitis vinifera (Grape), this protein is Lipoyl synthase, mitochondrial.